Reading from the N-terminus, the 131-residue chain is MAVKIRLKRMGQIRAPFYRIVVADSRNKRDGRSIEEIGLYNPMTDPSTIEVKSERVQYWLGVGAQPTEQVAALLKVTGDWQKFKGLPGAEGTYRVPTANTKPPRIPGGGAAKAVEAPAEAPAEAETPASES.

Residues 87-131 (PGAEGTYRVPTANTKPPRIPGGGAAKAVEAPAEAPAEAETPASES) form a disordered region. Residues 111-131 (AKAVEAPAEAPAEAETPASES) show a composition bias toward low complexity.

The protein belongs to the bacterial ribosomal protein bS16 family.

The protein is Small ribosomal subunit protein bS16 of Kineococcus radiotolerans (strain ATCC BAA-149 / DSM 14245 / SRS30216).